Here is a 434-residue protein sequence, read N- to C-terminus: 3-phosphoshikimate 1-carboxyvinyltransferase (434 aa).

Residues Lys-15, Ser-16, and Arg-20 each coordinate 3-phosphoshikimate. Residue Lys-15 coordinates phosphoenolpyruvate. Phosphoenolpyruvate contacts are provided by Gly-96 and Arg-124. Residues Ser-169, Gln-171, Ser-195, Asp-319, and Lys-346 each coordinate 3-phosphoshikimate. Gln-171 contributes to the phosphoenolpyruvate binding site. Asp-319 functions as the Proton acceptor in the catalytic mechanism. The phosphoenolpyruvate site is built by Arg-350 and Arg-394.

Belongs to the EPSP synthase family. In terms of assembly, monomer.

Its subcellular location is the cytoplasm. The enzyme catalyses 3-phosphoshikimate + phosphoenolpyruvate = 5-O-(1-carboxyvinyl)-3-phosphoshikimate + phosphate. The protein operates within metabolic intermediate biosynthesis; chorismate biosynthesis; chorismate from D-erythrose 4-phosphate and phosphoenolpyruvate: step 6/7. Its function is as follows. Catalyzes the transfer of the enolpyruvyl moiety of phosphoenolpyruvate (PEP) to the 5-hydroxyl of shikimate-3-phosphate (S3P) to produce enolpyruvyl shikimate-3-phosphate and inorganic phosphate. The chain is 3-phosphoshikimate 1-carboxyvinyltransferase from Chlorobaculum tepidum (strain ATCC 49652 / DSM 12025 / NBRC 103806 / TLS) (Chlorobium tepidum).